Consider the following 469-residue polypeptide: MESLNGCVLSQLRQSGAQLTRTLQKVQSRSYSAPVSGSIPAAKKKYVPTSGTYPLGFSASGINVGVKPKNTTKPDVCLVASDRPCAAAAVFTKNKFQAAPVTFSRSLLQKKGNQGIQGVVVNSGCANAVTGKGGLEDAGKMAQAADECFGQSESTLVMSTGVIGQRLPIEKITSNIPRAHKAMGSSHDHWLTAAKAICTTDTFPKLISRSFKLPSSPSVEYRIAGMTKGAGMIHPNMATLLGIIATDAPVSSTVLPAVLKHAVDRSFNSITIDGDTSTNDTVALLANGAAGGKEVVANTPDYDAFQTVLTDFSTDLAKLIVRDGEGATKFVTIRVVEAASEEAARKIASTIARSPLVKTALYGKDANWGRILCATGYSLVSEPGLPVNDIPEVVPEKTNVSFIPTDGTAELKLLVNGEPEQVDEARAAEILELEDLEILVRLGTGDKQATYWTCDYSHEYITINGDYRT.

Positions 199, 228, 239, 325, 464, and 469 each coordinate substrate. The active-site Nucleophile is the Thr239.

It belongs to the ArgJ family. Heterodimer of an alpha and a beta chain. Post-translationally, the alpha and beta chains are autoproteolytically processed from a single precursor protein within the mitochondrion.

It localises to the mitochondrion matrix. The enzyme catalyses N(2)-acetyl-L-ornithine + L-glutamate = N-acetyl-L-glutamate + L-ornithine. It catalyses the reaction L-glutamate + acetyl-CoA = N-acetyl-L-glutamate + CoA + H(+). It participates in amino-acid biosynthesis; L-arginine biosynthesis; L-ornithine and N-acetyl-L-glutamate from L-glutamate and N(2)-acetyl-L-ornithine (cyclic): step 1/1. The protein operates within amino-acid biosynthesis; L-arginine biosynthesis; N(2)-acetyl-L-ornithine from L-glutamate: step 1/4. Its function is as follows. Catalyzes two activities which are involved in the cyclic version of arginine biosynthesis: the synthesis of acetylglutamate from glutamate and acetyl-CoA, and of ornithine by transacetylation between acetylornithine and glutamate. This chain is Arginine biosynthesis bifunctional protein ArgJ, mitochondrial, found in Sordaria macrospora (strain ATCC MYA-333 / DSM 997 / K(L3346) / K-hell).